The chain runs to 360 residues: Nicotinate-nucleotide--dimethylbenzimidazole phosphoribosyltransferase (360 aa).

The active-site Proton acceptor is Glu-327.

This sequence belongs to the CobT family.

The enzyme catalyses 5,6-dimethylbenzimidazole + nicotinate beta-D-ribonucleotide = alpha-ribazole 5'-phosphate + nicotinate + H(+). It participates in nucleoside biosynthesis; alpha-ribazole biosynthesis; alpha-ribazole from 5,6-dimethylbenzimidazole: step 1/2. In terms of biological role, catalyzes the synthesis of alpha-ribazole-5'-phosphate from nicotinate mononucleotide (NAMN) and 5,6-dimethylbenzimidazole (DMB). The chain is Nicotinate-nucleotide--dimethylbenzimidazole phosphoribosyltransferase from Shewanella baltica (strain OS185).